The chain runs to 396 residues: uncharacterized protein (396 aa).

This is an uncharacterized protein from Pseudomonas amyloderamosa.